An 89-amino-acid polypeptide reads, in one-letter code: MAISQERKNEIIKEYARHEGDTGSPEVQIAVLTEDINQLNEHARTHKKDHHSYRGLMKKIGHRRNLLAYLRKTDIQRYRELIQRLGLRR.

Positions 1–21 are enriched in basic and acidic residues; sequence MAISQERKNEIIKEYARHEGD. Residues 1 to 24 are disordered; it reads MAISQERKNEIIKEYARHEGDTGS.

Belongs to the universal ribosomal protein uS15 family. In terms of assembly, part of the 30S ribosomal subunit. Forms a bridge to the 50S subunit in the 70S ribosome, contacting the 23S rRNA.

One of the primary rRNA binding proteins, it binds directly to 16S rRNA where it helps nucleate assembly of the platform of the 30S subunit by binding and bridging several RNA helices of the 16S rRNA. In terms of biological role, forms an intersubunit bridge (bridge B4) with the 23S rRNA of the 50S subunit in the ribosome. The protein is Small ribosomal subunit protein uS15 of Enterococcus faecalis (strain ATCC 700802 / V583).